A 567-amino-acid polypeptide reads, in one-letter code: Platelet glycoprotein V (567 aa).

Residues 1-16 form the signal peptide; that stretch reads MLRSALLSAVLPLLRA. One can recognise an LRRNT domain in the interval 17–50; the sequence is QPFPCPKTCKCVVRDAAQCSGGSVAHIAELGLPT. Over 17-522 the chain is Extracellular; it reads QPFPCPKTCK…ESPNNRLYWG (506 aa). Residues Asn-51 and Asn-67 are each glycosylated (N-linked (GlcNAc...) asparagine). 14 LRR repeats span residues 75–96, 99–120, 123–144, 147–168, 171–193, 195–216, 219–240, 243–264, 267–288, 291–312, 315–337, 340–361, 364–385, and 388–409; these read VLQR…TFND, KLKT…ILDK, LLEQ…LFQQ, NLQE…LFSS, ELKL…LGAQ, KLEK…LLSN, ALTE…AFDR, NLSS…LFLH, SVSR…LFGE, GLRE…AFRN, GLQT…VFQG, ELRV…ALRG, HLRQ…LFRN, and SLES…VFAA. N-linked (GlcNAc...) asparagine glycosylation occurs at Asn-181. N-linked (GlcNAc...) asparagine glycosylation is present at Asn-243. N-linked (GlcNAc...) asparagine glycosylation is found at Asn-298 and Asn-312. A glycan (N-linked (GlcNAc...) asparagine) is linked at Asn-385. The region spanning 421 to 474 is the LRRCT domain; that stretch reads NPWLCDCGLWRFLQWLRHHPDILGRDEPPQCRGPEPRASLSFWELLQGDPWCPD. A helical membrane pass occupies residues 523 to 543; sequence LYILLLVAQAIIAAFIVFAMI. Residues 544-567 lie on the Cytoplasmic side of the membrane; that stretch reads KIGQLFRTLIREKLLLEAMGKSCN.

The protein resides in the membrane. The GPIb-V-IX complex functions as the vWF receptor and mediates vWF-dependent platelet adhesion to blood vessels. The adhesion of platelets to injured vascular surfaces in the arterial circulation is a critical initiating event in hemostasis. This chain is Platelet glycoprotein V (Gp5), found in Mus musculus (Mouse).